The chain runs to 239 residues: Ras-like protein B (239 aa).

GTP-binding positions include 13–18 (GVGKTA), 29–35 (VETYDPT), 59–60 (AG), 139–142 (NKSD), and 169–171 (SAK). Residues 32 to 40 (YDPTIEDSY) carry the Effector region motif. The interval 191-227 (RQQQQGGRAQDRRPTGLGPMRDRDAGPEYPKTFRPDR) is disordered. A compositionally biased stretch (basic and acidic residues) spans 199-226 (AQDRRPTGLGPMRDRDAGPEYPKTFRPD).

This sequence belongs to the small GTPase superfamily. Ras family. As to quaternary structure, interacts with mpkA.

It carries out the reaction GTP + H2O = GDP + phosphate + H(+). Ras-like protein involved in the activation of Ras protein signal transduction. Ras proteins bind GDP/GTP and possess intrinsic GTPase activity. Plays a role in hyphal morphology and conidiophore development. Required for full virulence. The protein is Ras-like protein B of Aspergillus fumigatus (strain ATCC MYA-4609 / CBS 101355 / FGSC A1100 / Af293) (Neosartorya fumigata).